Here is a 184-residue protein sequence, read N- to C-terminus: Ribosome-recycling factor (184 aa).

This sequence belongs to the RRF family.

The protein localises to the cytoplasm. In terms of biological role, responsible for the release of ribosomes from messenger RNA at the termination of protein biosynthesis. May increase the efficiency of translation by recycling ribosomes from one round of translation to another. In Acinetobacter baumannii (strain AB307-0294), this protein is Ribosome-recycling factor.